We begin with the raw amino-acid sequence, 102 residues long: Large ribosomal subunit protein bL21 (102 aa).

This sequence belongs to the bacterial ribosomal protein bL21 family. In terms of assembly, part of the 50S ribosomal subunit. Contacts protein L20.

In terms of biological role, this protein binds to 23S rRNA in the presence of protein L20. The polypeptide is Large ribosomal subunit protein bL21 (Desulfovibrio desulfuricans (strain ATCC 27774 / DSM 6949 / MB)).